A 101-amino-acid chain; its full sequence is NAD(P)H-quinone oxidoreductase subunit 4L, chloroplastic (101 aa).

Helical transmembrane passes span 2 to 22 (MLEHVLVLSAYLFSVGLYGLI), 32 to 52 (MCLELILNAVNINFVTFSDFF), and 61 to 81 (IFSIFVIAIAAAEAAIGLAIV).

It belongs to the complex I subunit 4L family. NDH is composed of at least 16 different subunits, 5 of which are encoded in the nucleus.

It is found in the plastid. The protein resides in the chloroplast thylakoid membrane. It carries out the reaction a plastoquinone + NADH + (n+1) H(+)(in) = a plastoquinol + NAD(+) + n H(+)(out). The catalysed reaction is a plastoquinone + NADPH + (n+1) H(+)(in) = a plastoquinol + NADP(+) + n H(+)(out). Its function is as follows. NDH shuttles electrons from NAD(P)H:plastoquinone, via FMN and iron-sulfur (Fe-S) centers, to quinones in the photosynthetic chain and possibly in a chloroplast respiratory chain. The immediate electron acceptor for the enzyme in this species is believed to be plastoquinone. Couples the redox reaction to proton translocation, and thus conserves the redox energy in a proton gradient. The polypeptide is NAD(P)H-quinone oxidoreductase subunit 4L, chloroplastic (Panax ginseng (Korean ginseng)).